Here is a 104-residue protein sequence, read N- to C-terminus: PE-PGRS family protein PE_PGRS60 (104 aa).

Residues 1-60 (MSYVIAAPEALVAAATDLATLGSTIGAANAAAAGSTTALLTAGADEVSAAIAAYSECTAR) form the PE domain. A disordered region spans residues 64–104 (HSVRGRRRSMSGSCRPWPQVGAPMRPPRPPASRRCRARSIC). The span at 94-104 (ASRRCRARSIC) shows a compositional bias: basic residues.

Belongs to the mycobacterial PE family. PGRS subfamily.

Its function is as follows. Binds fibronectin. May contribute to pathogenicity. The sequence is that of PE-PGRS family protein PE_PGRS60 from Mycobacterium tuberculosis (strain ATCC 25618 / H37Rv).